Reading from the N-terminus, the 1426-residue chain is MWAAEAAFARSGSWREEEDEQEALRWAALQRLPTVARARRGLLRSPAPGEDRVQGDDALCEVDVAGLSPGDRTALVDRLLADSGDVEDFFRRIRSRFDAVQIEFPKIEVRYEDLTVDAYVHVGSRALPTIPNFICNMTEAFLRHLRIYRGGRVKLPILDNVSGIIRPSRMTLLLGPPSSGKTTLLLALAGRLGPGLKVSGNITYNGHHLNEFVPQRTSAYVSQQDWHASEMTVRETLEFAGRCQGVGIKYDMLVELLRREKNEGIKPDEDLDVFMKALALEGKQTSLVAEYIMKVYGLDICADTIVGDEMIKGISGGQKKRLTTGELLVGSARVLFMDEISTGLDSATTYQIIKYLRHSTHALDGTTIISLLQPAPETYELFDDVILISEGQIVYQGPREYAVDFFAGMGFRCPERKNVADFLQEVLSKKDQQQYWCHYDYPYQYVSVSKFAEAFKTFVIGKRLHDELAVPYNRHRNHPAALSTSNYGVRRLELLKSNFQWQHLLMKRNSFIYVFKFIQLLLVALITMTVFFRSTMHRDSVDDGIIYLGALYFAIVMILFNGFTEVSLLVTKLPILYKHRDLHFYPPWAYTLPSWLLSIPTSLIESGMWVLVTYYVVGYDPQFTRCLGQFLLLFFLHQTSLALFRVMASLGRNMIVANTFGSFALLVVMILGGFIITKESIPAWWIWGYWISPMMYAQNAISVNEFLGHSWSQQFANQNITLGEAILTGYGLFKEKYWFWIGVGALFGYAIVLNFLFTLFLTLLNPIGNIQAVVSKDDIQHRAPRRKNGKLALELRSYLHSASLNGHNLKDQKGMVLPFQPLSMCFKNINYYVDVPAELKSQGIVEDRLQLLIDVTGAFRPGILTALVGVSGAGKTTLMDVLAGRKTGGLIEGSITISGYPKNQETFTRISGYCEQNDVHSPCLTVIESLLYSACLRLPSHVDVNTRRVFVEEVMELVELNALSGALVGLPGVNGLSTEQRKRLTIAVELVANPSIVFMDEPTSGLDARSAAIVMRTVRNIVNTGRTIVCTIHQPSIDIFESFDELLFMKRGGQLIYAGPLGSKSRNLVEFFEAIPGVPKIRDGYNPAAWMLEVTSTQMEQILGVDFAEYYRQSKLFQQTQEMVDILSRPRRESKELTFATKYSQPFFAQYAACLWKQNLSYWRNPQYTAVRFFYTVIISLMFGTICWKFGSRRETQHDIFNAMGAMYAAVLFIGITNATSVQPVISIERFVSYRERAAGMYSALPFAFSLVTVEFPYILVQSLIYGTIFYSLGSFEWTAVKFLWYLFFMYFTLLYFTFYGMMTTAITPNHTVAPIIAAPFYTLWNLFCGFMIPRKRIPAWWRWYYWANPVSWTLYGLLTSQFGDLDQPLLLADGITTTTAVDFLRDHFGFRHDFLGVVAGMVAGFCVLFAVVFALAIKYLNFQRR.

The ABC transporter 1 domain maps to 142-415; it reads LRHLRIYRGG…FAGMGFRCPE (274 aa). 175 to 182 provides a ligand contact to ATP; it reads GPPSSGKT. The ABC transmembrane type-2 1 domain maps to 493 to 706; sequence ELLKSNFQWQ…AQNAISVNEF (214 aa). 7 helical membrane passes run 511–531, 544–564, 592–612, 630–650, 655–675, 681–701, and 741–761; these read FIYVFKFIQLLLVALITMTVF, GIIYLGALYFAIVMILFNGFT, LPSWLLSIPTSLIESGMWVLV, FLLLFFLHQTSLALFRVMASL, IVANTFGSFALLVVMILGGFI, IPAWWIWGYWISPMMYAQNAI, and IGVGALFGYAIVLNFLFTLFL. The ABC transporter 2 domain maps to 824–1076; it reads MCFKNINYYV…NLVEFFEAIP (253 aa). An ATP-binding site is contributed by 869-876; it reads GVSGAGKT. In terms of domain architecture, ABC transmembrane type-2 2 spans 1149 to 1363; the sequence is AQYAACLWKQ…TLYGLLTSQF (215 aa). The next 7 membrane-spanning stretches (helical) occupy residues 1168–1188, 1200–1220, 1245–1265, 1283–1303, 1313–1333, 1341–1363, and 1398–1418; these read YTAVRFFYTVIISLMFGTICW, IFNAMGAMYAAVLFIGITNAT, LPFAFSLVTVEFPYILVQSLI, FLWYLFFMYFTLLYFTFYGMM, VAPIIAAPFYTLWNLFCGFMI, WWRWYYWANPVSWTLYGLLTSQF, and VVAGMVAGFCVLFAVVFALAI.

The protein belongs to the ABC transporter superfamily. ABCG family. PDR (TC 3.A.1.205) subfamily.

It is found in the membrane. Its function is as follows. May be a general defense protein. The protein is ABC transporter G family member 31 of Oryza sativa subsp. japonica (Rice).